The primary structure comprises 285 residues: NAD kinase (285 aa).

Residue D76 is the Proton acceptor of the active site. NAD(+) is bound by residues D76–G77, N151–E152, H162, R179, D181, T192–S197, and Q252.

This sequence belongs to the NAD kinase family. Requires a divalent metal cation as cofactor.

The protein resides in the cytoplasm. It carries out the reaction NAD(+) + ATP = ADP + NADP(+) + H(+). Functionally, involved in the regulation of the intracellular balance of NAD and NADP, and is a key enzyme in the biosynthesis of NADP. Catalyzes specifically the phosphorylation on 2'-hydroxyl of the adenosine moiety of NAD to yield NADP. The polypeptide is NAD kinase (Haemophilus influenzae (strain ATCC 51907 / DSM 11121 / KW20 / Rd)).